We begin with the raw amino-acid sequence, 257 residues long: Large ribosomal subunit protein uL2 (257 aa).

Residues Lys42 and Lys149 each participate in a glycyl lysine isopeptide (Lys-Gly) (interchain with G-Cter in SUMO2) cross-link. The interval 207–232 is disordered; that stretch reads VEHPFGGGNHQHIGKPSTIRRDAPAG. Position 216 is a (3S)-3-hydroxyhistidine (His216). Residues Lys234 and Lys250 each participate in a glycyl lysine isopeptide (Lys-Gly) (interchain with G-Cter in SUMO2) cross-link.

It belongs to the universal ribosomal protein uL2 family. Component of the large ribosomal subunit. Interacts with CRY1. Hydroxylated on His-216 by RIOX1. The modification is impaired by hypoxia.

Its subcellular location is the cytoplasm. Component of the large ribosomal subunit. The ribosome is a large ribonucleoprotein complex responsible for the synthesis of proteins in the cell. The sequence is that of Large ribosomal subunit protein uL2 (RPL8) from Bos taurus (Bovine).